A 236-amino-acid polypeptide reads, in one-letter code: 7-cyano-7-deazaguanine synthase (236 aa).

7-17 (CSGGLDSVSLA) is an ATP binding site. 4 residues coordinate Zn(2+): Cys-185, Cys-193, Cys-196, and Cys-199.

Belongs to the QueC family. Requires Zn(2+) as cofactor.

The enzyme catalyses 7-carboxy-7-deazaguanine + NH4(+) + ATP = 7-cyano-7-deazaguanine + ADP + phosphate + H2O + H(+). It participates in purine metabolism; 7-cyano-7-deazaguanine biosynthesis. Its function is as follows. Catalyzes the ATP-dependent conversion of 7-carboxy-7-deazaguanine (CDG) to 7-cyano-7-deazaguanine (preQ(0)). This is 7-cyano-7-deazaguanine synthase from Rhizobium etli (strain CIAT 652).